The following is a 215-amino-acid chain: Cytochrome c biogenesis ATP-binding export protein CcmA (215 aa).

The 213-residue stretch at 3-215 folds into the ABC transporter domain; the sequence is LEAENLAGER…MAAFSVEDIA (213 aa). 35 to 42 serves as a coordination point for ATP; sequence GPNGSGKS.

The protein belongs to the ABC transporter superfamily. CcmA exporter (TC 3.A.1.107) family. As to quaternary structure, the complex is composed of two ATP-binding proteins (CcmA) and two transmembrane proteins (CcmB).

The protein localises to the cell inner membrane. The catalysed reaction is heme b(in) + ATP + H2O = heme b(out) + ADP + phosphate + H(+). In terms of biological role, part of the ABC transporter complex CcmAB involved in the biogenesis of c-type cytochromes; once thought to export heme, this seems not to be the case, but its exact role is uncertain. Responsible for energy coupling to the transport system. This chain is Cytochrome c biogenesis ATP-binding export protein CcmA, found in Brucella abortus (strain 2308).